The following is a 458-amino-acid chain: ATP synthase subunit beta (458 aa).

ATP is bound at residue glycine 148–threonine 155.

This sequence belongs to the ATPase alpha/beta chains family. In terms of assembly, F-type ATPases have 2 components, CF(1) - the catalytic core - and CF(0) - the membrane proton channel. CF(1) has five subunits: alpha(3), beta(3), gamma(1), delta(1), epsilon(1). CF(0) has three main subunits: a(1), b(2) and c(9-12). The alpha and beta chains form an alternating ring which encloses part of the gamma chain. CF(1) is attached to CF(0) by a central stalk formed by the gamma and epsilon chains, while a peripheral stalk is formed by the delta and b chains.

The protein resides in the cell inner membrane. The catalysed reaction is ATP + H2O + 4 H(+)(in) = ADP + phosphate + 5 H(+)(out). Functionally, produces ATP from ADP in the presence of a proton gradient across the membrane. The catalytic sites are hosted primarily by the beta subunits. This chain is ATP synthase subunit beta, found in Pseudomonas entomophila (strain L48).